The chain runs to 128 residues: Putative pre-16S rRNA nuclease (128 aa).

This sequence belongs to the YqgF nuclease family.

Its subcellular location is the cytoplasm. Its function is as follows. Could be a nuclease involved in processing of the 5'-end of pre-16S rRNA. The sequence is that of Putative pre-16S rRNA nuclease from Sulfurovum sp. (strain NBC37-1).